The following is a 3957-amino-acid chain: Ankyrin-2 (3957 aa).

Positions M1–E14 are enriched in basic and acidic residues. Positions M1–S34 are disordered. 24 ANK repeats span residues D30–Q62, N63–S92, K96–A125, N129–T158, D162–V191, L193–V220, S232–F261, N265–A294, D298–A327, N331–D360, D364–A393, N397–A426, S430–V459, R463–A492, E496–A525, N529–L558, K562–S591, N595–A624, N628–I657, Q661–M690, S694–A723, L727–A756, N760–A789, and N793–T822. 2 positions are modified to phosphoserine: S31 and S34. Y378 carries the post-translational modification Phosphotyrosine. Y531 bears the Phosphotyrosine mark. A Phosphoserine modification is found at S846. The residue at position 853 (T853) is a Phosphothreonine. A Phosphoserine modification is found at S874. The interaction with SPTBN1 stretch occupies residues S966–D1125. ZU5 domains are found at residues F968–R1156 and K1158–C1304. Positions V1289 to E1423 are UPA domain. Y1382 is subject to Phosphotyrosine. Residues I1450–K1535 enclose the Death 1 domain. The interval K1457–V1486 is disordered. Residues S1459, S1461, S1473, S1500, and S1596 each carry the phosphoserine modification. Acidic residues predominate over residues S1461–M1471. 7 disordered regions span residues A1670–S2137, A2197–L2411, A2430–P2484, S2507–E2586, E2604–H2852, D2864–F2904, and Q2923–T2951. Basic and acidic residues-rich tracts occupy residues S1674 to P1683 and K1711 to S1733. A phosphoserine mark is found at S1732, S1733, and S1736. A compositionally biased stretch (basic and acidic residues) spans I1766–G1783. Repeat A repeat units lie at residues H1806–R1817, H1818–R1829, H1830–R1841, H1842–K1853, H1854–R1865, H1866–K1877, and H1878–R1889. The segment at H1806–R1983 is repeat-rich region. S1855 and S1858 each carry phosphoserine. Composition is skewed to basic and acidic residues over residues K1886–P1902 and R1921–L1937. A Repeat A; approximate repeat occupies H1890–R1900. Repeat A repeat units follow at residues H1901–K1912 and R1913–K1924. The Repeat A; approximate repeat unit spans residues H1925–K1935. S1929 carries the phosphoserine modification. Repeat A repeat units follow at residues R1936–K1947, H1948–K1959, H1960–K1971, and Q1972–R1983. 4 stretches are compositionally biased toward basic and acidic residues: residues K1980–M1994, P2003–G2034, V2075–P2093, and E2102–D2117. S2127 bears the Phosphoserine mark. A compositionally biased stretch (basic and acidic residues) spans P2128 to S2137. T2239 is modified (phosphothreonine). Residues P2240 to P2251 show a composition bias toward polar residues. A Phosphoserine modification is found at S2243. Residues K2252–T2282 are compositionally biased toward basic and acidic residues. T2269 is subject to Phosphothreonine. S2275 carries the post-translational modification Phosphoserine. Residues T2355–S2376 show a composition bias toward polar residues. 5 positions are modified to phosphoserine: S2405, S2440, S2454, S2516, and S2521. The span at E2523 to E2545 shows a compositional bias: polar residues. Composition is skewed to basic and acidic residues over residues N2576–E2586 and E2604–E2619. Position 2583 is a phosphothreonine (T2583). Phosphoserine occurs at positions 2679 and 2701. Positions P2696–P2705 are enriched in low complexity. Over residues E2729–G2776 the composition is skewed to basic and acidic residues. 2 positions are modified to phosphoserine: S2781 and S2795. Low complexity predominate over residues S2781 to S2791. Residues S2892–R2903 show a composition bias toward polar residues. Position 2956 is a phosphoserine (S2956). Disordered regions lie at residues N2987–E3016, L3069–N3099, and Q3136–E3462. The segment covering Q2998–E3016 has biased composition (polar residues). At S3075 the chain carries Phosphoserine. Phosphothreonine is present on T3078. The span at T3078–T3087 shows a compositional bias: low complexity. Over residues E3090–N3099 the composition is skewed to polar residues. Residues E3137 to E3149 are compositionally biased toward basic and acidic residues. The segment covering L3157 to S3169 has biased composition (low complexity). Acidic residues predominate over residues V3175 to P3194. Composition is skewed to polar residues over residues A3198–T3212 and L3256–V3265. 3 positions are modified to phosphoserine: S3273, S3276, and S3277. Positions E3335 to P3344 are enriched in basic and acidic residues. A compositionally biased stretch (polar residues) spans V3357 to P3374. Phosphoserine is present on residues S3390 and S3409. The segment covering S3409–E3423 has biased composition (basic and acidic residues). Positions S3446 to T3460 are enriched in low complexity. Phosphoserine is present on S3474. One can recognise a Death 2 domain in the interval I3569–T3653. S3735 is modified (phosphoserine). Residues T3776, T3797, T3803, and T3814 each carry the phosphothreonine modification. Residues P3777 to T3858 are disordered. S3823 is subject to Phosphoserine. Over residues P3832–P3841 the composition is skewed to basic and acidic residues. S3909 is modified (phosphoserine).

In terms of assembly, interacts with RHBG and SPTBN1. Colocalizes with Na/K ATPase, Na/Ca exchanger and SPTBN1. Directly interacts with DMD; this interaction is necessary for DMD localization at the sarcolemma. Interacts with DCTN4; this interaction is required for DCTN4 retention at costameres. Identified in complexes that contain VIM, EZR, AHNAK, BFSP1, BFSP2, ANK2, PLEC, PRX and spectrin. Interacts (via death domain) with RABGAP1L (via Rab-GAP TBC domain). In terms of processing, phosphorylated at multiple sites by different protein kinases and each phosphorylation event regulates the protein's structure and function. In terms of tissue distribution, present in plasma membrane of neurons as well as glial cells throughout the brain. Expressed in fetal brain and in temporal cortex of adult brain. Also expressed in the inner segments of rod photoreceptors in retina.

It localises to the cytoplasm. The protein localises to the cytoskeleton. The protein resides in the membrane. Its subcellular location is the myofibril. It is found in the sarcomere. It localises to the m line. The protein localises to the apical cell membrane. The protein resides in the cell membrane. Its subcellular location is the postsynaptic cell membrane. It is found in the early endosome. It localises to the recycling endosome. The protein localises to the lysosome. The protein resides in the mitochondrion. Its subcellular location is the z line. It is found in the sarcolemma. It localises to the T-tubule. Plays an essential role in the localization and membrane stabilization of ion transporters and ion channels in several cell types, including cardiomyocytes, as well as in striated muscle cells. In skeletal muscle, required for proper localization of DMD and DCTN4 and for the formation and/or stability of a special subset of microtubules associated with costameres and neuromuscular junctions. In cardiomyocytes, required for coordinate assembly of Na/Ca exchanger, SLC8A1/NCX1, Na/K ATPases ATP1A1 and ATP1A2 and inositol 1,4,5-trisphosphate (InsP3) receptors at sarcoplasmic reticulum/sarcolemma sites. Required for expression and targeting of SPTBN1 in neonatal cardiomyocytes and for the regulation of neonatal cardiomyocyte contraction rate. In the inner segment of rod photoreceptors, required for the coordinated expression of the Na/K ATPase, Na/Ca exchanger and beta-2-spectrin (SPTBN1). Plays a role in endocytosis and intracellular protein transport. Associates with phosphatidylinositol 3-phosphate (PI3P)-positive organelles and binds dynactin to promote long-range motility of cells. Recruits RABGAP1L to (PI3P)-positive early endosomes, where RABGAP1L inactivates RAB22A, and promotes polarized trafficking to the leading edge of the migrating cells. Part of the ANK2/RABGAP1L complex which is required for the polarized recycling of fibronectin receptor ITGA5 ITGB1 to the plasma membrane that enables continuous directional cell migration. The protein is Ankyrin-2 (ANK2) of Homo sapiens (Human).